We begin with the raw amino-acid sequence, 66 residues long: Large ribosomal subunit protein uL29 (66 aa).

Belongs to the universal ribosomal protein uL29 family.

The protein is Large ribosomal subunit protein uL29 of Thermoplasma volcanium (strain ATCC 51530 / DSM 4299 / JCM 9571 / NBRC 15438 / GSS1).